The sequence spans 1478 residues: Phospholipase B1, membrane-associated (1478 aa).

The first 27 residues, 1 to 27 (MELYPGVSPVGLLLLLLLGQGPSQIHG), serve as a signal peptide directing secretion. The Extracellular portion of the chain corresponds to 28-1422 (SSGENTLAWQ…KAEEPSNALY (1395 aa)). 4 tandem repeats follow at residues 43 to 351 (WTLK…YKNS), 366 to 711 (MKEG…TKNS), 712 to 1058 (NLGN…FRNS), and 1068 to 1407 (IENW…LRNS). The interval 43 to 1407 (WTLKNFPFPC…RPFLYTLRNS (1365 aa)) is 4 X 308-326 AA approximate repeats. A glycan (N-linked (GlcNAc...) asparagine) is linked at Asn-180. Catalysis depends on residues Ser-404 and Asp-518. N-linked (GlcNAc...) asparagine glycosylation is found at Asn-525, Asn-626, and Asn-637. Residue His-659 is part of the active site. 10 N-linked (GlcNAc...) asparagine glycosylation sites follow: Asn-715, Asn-764, Asn-787, Asn-801, Asn-830, Asn-926, Asn-1227, Asn-1280, Asn-1289, and Asn-1387. A necessary for membrane localization region spans residues 1408–1450 (QLLPDKAEEPSNALYWAVPVAAIGGLAVGILGVMLWRTVKPVQ). Residues 1423–1443 (WAVPVAAIGGLAVGILGVMLW) form a helical membrane-spanning segment. Topologically, residues 1444-1478 (RTVKPVQQEEEEEDTLPNTSVTQDAVSEKRLKAGN) are cytoplasmic. The tract at residues 1451-1478 (QEEEEEDTLPNTSVTQDAVSEKRLKAGN) is disordered. The segment covering 1459 to 1468 (LPNTSVTQDA) has biased composition (polar residues). Over residues 1469 to 1478 (VSEKRLKAGN) the composition is skewed to basic and acidic residues.

Belongs to the 'GDSL' lipolytic enzyme family. Phospholipase B1 subfamily. Undergoes proteolytic cleavage in the ileum.

It localises to the apical cell membrane. The enzyme catalyses a 1,2-diacyl-sn-glycero-3-phosphocholine + H2O = a 1-acyl-sn-glycero-3-phosphocholine + a fatty acid + H(+). It carries out the reaction a 1-O-alkyl-2-acyl-sn-glycero-3-phosphocholine + H2O = a 1-O-alkyl-sn-glycero-3-phosphocholine + a fatty acid + H(+). The catalysed reaction is a 1-acyl-sn-glycero-3-phosphocholine + H2O = sn-glycerol 3-phosphocholine + a fatty acid + H(+). It catalyses the reaction a triacylglycerol + H2O = a diacylglycerol + a fatty acid + H(+). The enzyme catalyses 1,2-dihexadecanoyl-sn-glycero-3-phosphocholine + H2O = 1-hexadecanoyl-sn-glycero-3-phosphocholine + hexadecanoate + H(+). It carries out the reaction 1-hexadecanoyl-2-(9Z-octadecenoyl)-sn-glycero-3-phosphocholine + H2O = 1-hexadecanoyl-sn-glycero-3-phosphocholine + (9Z)-octadecenoate + H(+). The catalysed reaction is 1,2-di-(9Z-octadecenoyl)-sn-glycero-3-phosphocholine + H2O = 1-(9Z-octadecenoyl)-sn-glycero-3-phosphocholine + (9Z)-octadecenoate + H(+). It catalyses the reaction 1-hexadecanoyl-2-(9Z,12Z-octadecadienoyl)-sn-glycero-3-phosphocholine + H2O = (9Z,12Z)-octadecadienoate + 1-hexadecanoyl-sn-glycero-3-phosphocholine + H(+). The enzyme catalyses 1-hexadecanoyl-2-(9Z,12Z-octadecadienoyl)-sn-glycero-3-phosphocholine + H2O = 2-(9Z,12Z-octadecadienoyl)-sn-glycero-3-phosphocholine + hexadecanoate + H(+). It carries out the reaction 1-hexadecanoyl-2-(9Z-octadecenoyl)-sn-glycero-3-phosphoethanolamine + H2O = 1-hexadecanoyl-sn-glycero-3-phosphoethanolamine + (9Z)-octadecenoate + H(+). The catalysed reaction is 1-hexadecanoyl-2-(9Z-octadecenoyl)-sn-glycero-3-phospho-(1'-sn-glycerol) + H2O = 1-hexadecanoyl-sn-glycero-3-phospho-(1'-sn-glycerol) + (9Z)-octadecenoate + H(+). It catalyses the reaction 1,2-dihexadecanoyl-sn-glycero-3-phosphocholine + 2 H2O = sn-glycerol 3-phosphocholine + 2 hexadecanoate + 2 H(+). The enzyme catalyses 1-O-hexadecyl-2-(9Z)-octadecenoyl-sn-glycero-3-phosphocholine + H2O = 1-O-hexadecyl-sn-glycero-3-phosphocholine + (9Z)-octadecenoate + H(+). It carries out the reaction 1-hexadecanoyl-sn-glycero-3-phosphocholine + H2O = sn-glycerol 3-phosphocholine + hexadecanoate + H(+). The catalysed reaction is 1,2,3-tri-(9Z-octadecenoyl)-glycerol + H2O = di-(9Z)-octadecenoylglycerol + (9Z)-octadecenoate + H(+). It catalyses the reaction 1-hexadecanoyl-2-(9Z)-octadecenoyl-3-octadecanoyl-sn-glycerol + H2O = 1-hexadecanoyl-2-(9Z-octadecenoyl)-sn-glycerol + octadecanoate + H(+). The enzyme catalyses 1,3-dihexadecanoyl-2-(9Z-octadecenoyl)glycerol + H2O = 1,3-dihexadecanoylglycerol + (9Z)-octadecenoate + H(+). It carries out the reaction 1,3-dihexadecanoyl-2-(9Z-octadecenoyl)glycerol + H2O = 1-hexadecanoyl-2-(9Z-octadecenoyl)-glycerol + hexadecanoate + H(+). The catalysed reaction is 1-hexadecanoyl-2-(9Z)-octadecenoyl-3-octadecanoyl-sn-glycerol + H2O = 1-hexadecanoyl-3-octadecanoyl-sn-glycerol + (9Z)-octadecenoate + H(+). It catalyses the reaction 1-hexadecanoyl-2-(9Z)-octadecenoyl-3-octadecanoyl-sn-glycerol + H2O = 2-(9Z-octadecenoyl)-3-octadecanoyl-sn-glycerol + hexadecanoate + H(+). The enzyme catalyses 1-octadecanoyl-2-(9Z,12Z)-octadecadienoyl-sn-glycerol + H2O = 1-octadecanoyl-sn-glycerol + (9Z,12Z)-octadecadienoate + H(+). It carries out the reaction 1,2-di-(9Z-octadecenoyl)-sn-glycerol + H2O = 1-(9Z-octadecenoyl)-sn-glycerol + (9Z)-octadecenoate + H(+). The catalysed reaction is 2,3-di-(9Z)-octadecenoyl-sn-glycerol + H2O = 3-(9Z-octadecenoyl)-sn-glycerol + (9Z)-octadecenoate + H(+). It catalyses the reaction 1,3-di-(9Z-octadecenoyl)-glycerol + H2O = 1-(9Z-octadecenoyl)-glycerol + (9Z)-octadecenoate + H(+). The enzyme catalyses 1-(9Z-octadecenoyl)-glycerol + H2O = glycerol + (9Z)-octadecenoate + H(+). It carries out the reaction 2-(9Z-octadecenoyl)-glycerol + H2O = glycerol + (9Z)-octadecenoate + H(+). In terms of biological role, calcium-independent membrane-associated phospholipase that catalyzes complete diacylation of phospholipids by hydrolyzing both sn-1 and sn-2 fatty acyl chains attached to the glycerol backbone (phospholipase B activity). Has dual phospholipase and lysophospholipase activities toward diacylphospholipids. Preferentially cleaves sn-2 ester bonds over sn-1 bonds. Acts as a lipase toward glycerolipid substrates. Hydrolyzes fatty acyl chains of diacylglycerols with preference for the sn-2 position and of triacylglycerols with not positional selectivity. May also hydrolyze long chain retinyl esters such as retinyl palmitate. May contribute to digestion of dietary phospholipids, glycerolipids and retinoids, facilitating lipid absorption at the brush border. In Mus musculus (Mouse), this protein is Phospholipase B1, membrane-associated (Plb1).